We begin with the raw amino-acid sequence, 308 residues long: MNSKRMLLLVLFAFSLMLVERYFRNHQVEELRLSDWFHPRKRPDVITKTDWLAPIVWEGTFDRQVLEKHYRRRNITVGLAVFATGRFAEEYLRLFLHSANKHFMTGYRVIFYIMVDAFLQLPDIQPSPLRTFKAFEVDAERWWLEGSLVYMKSLGEHITSHIQDEVDFLFSMAVNQVFQNEFGVETLGPLVAQLHAWWYFRNTKNFPYERRPTSAASIPFGQGDFYYGSLMVGGTPRNILDFIEEYLNGVIHDIKNGLNSTYEKHLNKYFYLNKPTKLLSPEYSWDLAFSPPPQIQYVKVAHDSHRKL.

Over 1–6 (MNSKRM) the chain is Cytoplasmic. Residues 7–23 (LLLVLFAFSLMLVERYF) traverse the membrane as a helical; Signal-anchor for type II membrane protein segment. The Lumenal segment spans residues 24–308 (RNHQVEELRL…KVAHDSHRKL (285 aa)). N74 carries an N-linked (GlcNAc...) asparagine glycan. Substrate-binding positions include 82–87 (FATGRF), 173–175 (AVN), and 195–198 (HAWW). Residue E263 is the Nucleophile of the active site.

It belongs to the glycosyltransferase 6 family. Mn(2+) serves as cofactor.

The protein localises to the membrane. The polypeptide is Glycosyltransferase 6 domain-containing protein 1 (GLT6D1) (Macaca fascicularis (Crab-eating macaque)).